A 288-amino-acid chain; its full sequence is Transposase for insertion sequence element IS1106 (288 aa).

The protein belongs to the transposase 11 family.

Its function is as follows. Involved in the transposition of the insertion sequence. This chain is Transposase for insertion sequence element IS1106, found in Neisseria meningitidis serogroup B.